The sequence spans 132 residues: Subtelomeric hrmA-associated cluster protein AFUB_079000 (132 aa).

In terms of biological role, part of the subtelomeric hrmA-associated cluster (HAC) containing genes that alter the hyphal surface (such as reduced total chitin or increased beta-glucan exposure) and perturb inter-hyphal interactions within the developing biofilms, resulting in a loss of vertically aligned polarized growing filaments. Consequently, this hypoxia-typic morphotype (called H-MORPH) with altered biofilm architecture leads to increased hypoxia fitness, increased host inflammation, rapid disease progression, and mortality in a murine model of invasive aspergillosis. This chain is Subtelomeric hrmA-associated cluster protein AFUB_079000, found in Aspergillus fumigatus (strain CBS 144.89 / FGSC A1163 / CEA10) (Neosartorya fumigata).